Consider the following 310-residue polypeptide: N-acetyl-gamma-glutamyl-phosphate reductase (310 aa).

The active site involves cysteine 116.

The protein belongs to the NAGSA dehydrogenase family. Type 2 subfamily.

The protein resides in the cytoplasm. It carries out the reaction N-acetyl-L-glutamate 5-semialdehyde + phosphate + NADP(+) = N-acetyl-L-glutamyl 5-phosphate + NADPH + H(+). The protein operates within amino-acid biosynthesis; L-arginine biosynthesis; N(2)-acetyl-L-ornithine from L-glutamate: step 3/4. Functionally, catalyzes the NADPH-dependent reduction of N-acetyl-5-glutamyl phosphate to yield N-acetyl-L-glutamate 5-semialdehyde. The chain is N-acetyl-gamma-glutamyl-phosphate reductase from Chelativorans sp. (strain BNC1).